A 101-amino-acid chain; its full sequence is NADH-quinone oxidoreductase subunit K (101 aa).

A run of 3 helical transmembrane segments spans residues 4–24, 30–50, and 61–81; these read LGYFLIIGAILFGLGFAGIII, IVLLMCIELMLLAVNTNFIAF, and IFVFFILTVAAAESAIGLAIL.

The protein belongs to the complex I subunit 4L family. NDH-1 is composed of 14 different subunits. Subunits NuoA, H, J, K, L, M, N constitute the membrane sector of the complex.

The protein localises to the cell inner membrane. It catalyses the reaction a quinone + NADH + 5 H(+)(in) = a quinol + NAD(+) + 4 H(+)(out). In terms of biological role, NDH-1 shuttles electrons from NADH, via FMN and iron-sulfur (Fe-S) centers, to quinones in the respiratory chain. The immediate electron acceptor for the enzyme in this species is believed to be ubiquinone. Couples the redox reaction to proton translocation (for every two electrons transferred, four hydrogen ions are translocated across the cytoplasmic membrane), and thus conserves the redox energy in a proton gradient. This is NADH-quinone oxidoreductase subunit K from Coxiella burnetii (strain CbuG_Q212) (Coxiella burnetii (strain Q212)).